The sequence spans 227 residues: Uracil-DNA glycosylase (227 aa).

Aspartate 68 acts as the Proton acceptor in catalysis.

This sequence belongs to the uracil-DNA glycosylase (UDG) superfamily. UNG family.

Its subcellular location is the cytoplasm. It carries out the reaction Hydrolyzes single-stranded DNA or mismatched double-stranded DNA and polynucleotides, releasing free uracil.. Its function is as follows. Excises uracil residues from the DNA which can arise as a result of misincorporation of dUMP residues by DNA polymerase or due to deamination of cytosine. The protein is Uracil-DNA glycosylase of Mycolicibacterium smegmatis (strain ATCC 700084 / mc(2)155) (Mycobacterium smegmatis).